A 341-amino-acid polypeptide reads, in one-letter code: GTP-binding protein REM 2 (341 aa).

Positions Met1 to Thr13 are enriched in acidic residues. 2 disordered regions span residues Met1 to Val72 and Val84 to Glu106. The span at Leu18–Pro32 shows a compositional bias: polar residues. Residue Ser27 is modified to Phosphoserine. Residues Gln43–Arg54 show a composition bias toward basic and acidic residues. Over residues Ser94–Gly105 the composition is skewed to low complexity. GTP-binding positions include Gly122–Ser129, Asn230–Asp233, and Ala261–Ala262. Positions Arg282–Leu309 are disordered. Pro residues predominate over residues Pro294–Pro303. Residue Ser296 is modified to Phosphoserine.

The protein belongs to the small GTPase superfamily. RGK family. In terms of tissue distribution, expressed in brain and kidney.

The protein localises to the cell membrane. Binds GTP saturably and exhibits a low intrinsic rate of GTP hydrolysis. The protein is GTP-binding protein REM 2 (Rem2) of Rattus norvegicus (Rat).